The sequence spans 203 residues: MDELILPILILLFLVFVAYFFTKKSKKEENELQMMKKNQEVRKIVENARIRNDLPCLSGFKFGLSLRHIEDMGVSYTHLSRNFGTDLYVIEGRFAPIKNDLIESYFVDINSELGLTRITGNFFSTNNLDFIMEYYKRLLLEKYHEGIVNINDEMNLVLTLDEVIIQLSNIESNISLIYSLIKSDTPEQLAEMLKVQEKDKLGI.

The N-terminal stretch at 1–20 (MDELILPILILLFLVFVAYF) is a signal peptide.

This is an uncharacterized protein from Pasteurella multocida (strain Pm70).